We begin with the raw amino-acid sequence, 270 residues long: Cyclic pyranopterin monophosphate synthase, mitochondrial (270 aa).

A mitochondrion-targeting transit peptide spans 1 to 32; sequence MISTLRRAVFLRRFPAVVSPIKRAFSSRIDDE. Residues 187-189 and 225-226 each bind substrate; these read LCH and ME. Residue Asp-240 is part of the active site.

This sequence belongs to the MoaC family. Homohexamer. In terms of tissue distribution, abundantly expressed in the roots.

The protein localises to the mitochondrion matrix. It catalyses the reaction (8S)-3',8-cyclo-7,8-dihydroguanosine 5'-triphosphate = cyclic pyranopterin phosphate + diphosphate. The protein operates within cofactor biosynthesis; molybdopterin biosynthesis. Its function is as follows. Catalyzes the conversion of (8S)-3',8-cyclo-7,8-dihydroguanosine 5'-triphosphate to cyclic pyranopterin monophosphate (cPMP). This Arabidopsis thaliana (Mouse-ear cress) protein is Cyclic pyranopterin monophosphate synthase, mitochondrial (CNX3).